A 246-amino-acid chain; its full sequence is Carboxylesterase (246 aa).

Ser-93 (nucleophile) is an active-site residue. Catalysis depends on charge relay system residues Asp-192 and His-222.

It belongs to the lipase/esterase LIP3/BchO family. As to quaternary structure, homodimer.

It catalyses the reaction a carboxylic ester + H2O = an alcohol + a carboxylate + H(+). In terms of biological role, involved in the detoxification of xenobiotics. Shows maximal activity with C6 substrates, with gradually decreasing activity from C8 to C12 substrates. No activity for higher chain length substrates acids rather than long-chain ones. The chain is Carboxylesterase (est) from Bacillus subtilis (strain 168).